Reading from the N-terminus, the 433-residue chain is Pyroglutamylated RF-amide peptide receptor (433 aa).

The Extracellular segment spans residues 1–46 (MQALNITAEQFSRLLSAHNLTREQFIHRYGLRPLVYTPELPARAKV). 2 N-linked (GlcNAc...) asparagine glycosylation sites follow: Asn5 and Asn19. A helical transmembrane segment spans residues 47-67 (AFALAGALIFALALFGNSLVI). Topologically, residues 68-81 (YVVTRSKAMRTVTN) are cytoplasmic. A helical transmembrane segment spans residues 82–102 (IFICSLALSDLLIAFFCIPVT). Residues 103–120 (MLQNISDKWLGGAFICKM) are Extracellular-facing. Residues 121–141 (VPFVQSTAVVTEILTMTCIAV) form a helical membrane-spanning segment. The Cytoplasmic portion of the chain corresponds to 142 to 162 (ERHQGLVHPFKMKWQYTTRRA). A helical membrane pass occupies residues 163 to 183 (FTILGVVWLAAIIVGSPMWHV). Over 184–212 (QRLEIKYDFLYEKEHICCLEEWASPVHQR) the chain is Extracellular. The chain crosses the membrane as a helical span at residues 213 to 233 (IYSTFILVILFLLPLVVMLVL). Residues 234–271 (YSKIGYELWIKKRVGDSSALQTIHGKEMSKIARKKKRA) lie on the Cytoplasmic side of the membrane. Residues 272-292 (VIMMVTVVALFAACWAPFHVV) traverse the membrane as a helical segment. At 293-313 (HMMVEYSNFEKEYDDVTIKMV) the chain is on the extracellular side. The chain crosses the membrane as a helical span at residues 314 to 334 (FAVAQTIGFFNSICNPFVYAF). Residues 335–433 (MNENFKKNFL…NSTFGSGHEL (99 aa)) lie on the Cytoplasmic side of the membrane. The segment at 356 to 389 (SSPARKPGNSGISMMQKRAKLSRPQRPVEETKGD) is disordered.

Belongs to the G-protein coupled receptor 1 family. Highly expressed in the adrenal gland and at moderate levels in the eye and testis. Expressed widely in the brain with high levels in the hypothalamus and moderate levels in the amygdala, basal forebrain, cortex, medulla oblongata, midbrain and thalamus.

The protein localises to the cell membrane. Receptor for the orexigenic neuropeptide QRFP. The activity of this receptor is mediated by G proteins that modulate adenylate cyclase activity and intracellular calcium levels. This is Pyroglutamylated RF-amide peptide receptor (Qrfpr) from Rattus norvegicus (Rat).